The sequence spans 267 residues: Imidazole glycerol phosphate synthase subunit HisF (267 aa).

Catalysis depends on residues Asp21 and Asp140.

The protein belongs to the HisA/HisF family. Heterodimer of HisH and HisF.

Its subcellular location is the cytoplasm. The enzyme catalyses 5-[(5-phospho-1-deoxy-D-ribulos-1-ylimino)methylamino]-1-(5-phospho-beta-D-ribosyl)imidazole-4-carboxamide + L-glutamine = D-erythro-1-(imidazol-4-yl)glycerol 3-phosphate + 5-amino-1-(5-phospho-beta-D-ribosyl)imidazole-4-carboxamide + L-glutamate + H(+). It functions in the pathway amino-acid biosynthesis; L-histidine biosynthesis; L-histidine from 5-phospho-alpha-D-ribose 1-diphosphate: step 5/9. IGPS catalyzes the conversion of PRFAR and glutamine to IGP, AICAR and glutamate. The HisF subunit catalyzes the cyclization activity that produces IGP and AICAR from PRFAR using the ammonia provided by the HisH subunit. This Bordetella avium (strain 197N) protein is Imidazole glycerol phosphate synthase subunit HisF.